Consider the following 417-residue polypeptide: Probable glucuronosyltransferase Os01g0926700 (417 aa).

Over 1–3 (MRR) the chain is Cytoplasmic. A helical; Signal-anchor for type II membrane protein membrane pass occupies residues 4–24 (WVLAIAILAAAVCFFLGAQAQ). The Lumenal portion of the chain corresponds to 25 to 417 (EVRQGHQTER…AGPVGDLKPW (393 aa)). N144 and N405 each carry an N-linked (GlcNAc...) asparagine glycan.

This sequence belongs to the glycosyltransferase 47 family.

The protein localises to the golgi apparatus membrane. In terms of biological role, involved in the synthesis of glucuronoxylan hemicellulose in secondary cell walls. This is Probable glucuronosyltransferase Os01g0926700 from Oryza sativa subsp. japonica (Rice).